Consider the following 302-residue polypeptide: Vacuolar iron transporter (302 aa).

Over 1–70 (MPASGAGYAG…HTNTSSDYVK (70 aa)) the chain is Cytoplasmic. The helical transmembrane segment at 71 to 91 (AVVFGGLDGIVTIFAIVAGCV) threads the bilayer. Over 92–99 (GADLSCSQ) the chain is Vacuolar. The helical transmembrane segment at 100 to 120 (VLMVGLGNLLADAISMGFGEY) threads the bilayer. Over 121–211 (VSAAAEKDFV…IKRGLVMFTA (91 aa)) the chain is Cytoplasmic. Residues E137, E140, E148, E151, M185, and E189 each contribute to the Fe cation site. A helical membrane pass occupies residues 212–232 (FCFFGLLPLAGFIGWVAAFGL). Topologically, residues 233–235 (GAE) are vacuolar. A helical membrane pass occupies residues 236–256 (ADMAFLMACVVSIMTLFILGF). Residues 257–276 (SKGKFVGQNPTKSACLMAMN) lie on the Cytoplasmic side of the membrane. A helical transmembrane segment spans residues 277–297 (GGCAGTVAYGVGSLLQLVVGA). Over 298 to 302 (NLTAA) the chain is Vacuolar.

The protein belongs to the CCC1 family.

Its subcellular location is the vacuole membrane. It carries out the reaction Fe(2+)(in) = Fe(2+)(out). Vacuolar iron transporter involved in the transfer of iron ions from the cytosol to the vacuole for intracellular iron storage. Plays an essential role in detoxification of excess iron. Important for parasite survival within macrophages and parasite virulence in vivo. The protein is Vacuolar iron transporter of Toxoplasma gondii (strain ATCC 50861 / VEG).